The chain runs to 31 residues: Dermaseptin-7.2TR (31 aa).

E31 is modified (glutamic acid 1-amide).

As to expression, expressed by the skin glands.

Its subcellular location is the secreted. Has antimicrobial activity. In Phyllomedusa trinitatis (Trinidad leaf frog), this protein is Dermaseptin-7.2TR.